A 42-amino-acid chain; its full sequence is Potassium channel gamma toxin gamma-KTx 1.9 (42 aa).

4 cysteine pairs are disulfide-bonded: cysteine 5–cysteine 23, cysteine 11–cysteine 34, cysteine 20–cysteine 39, and cysteine 24–cysteine 41.

It belongs to the ergtoxin family. Gamma-KTx 1 subfamily. As to expression, expressed by the venom gland.

It localises to the secreted. Its function is as follows. Blocks human voltage-gated potassium channel Kv11.1/KCNH2/ERG1 (IC(50)=16.9 nM). The chain is Potassium channel gamma toxin gamma-KTx 1.9 from Centruroides tecomanus (Scorpion).